The primary structure comprises 352 residues: Maleylacetate reductase (352 aa).

The protein belongs to the iron-containing alcohol dehydrogenase family.

It carries out the reaction 3-oxoadipate + NAD(+) = maleylacetate + NADH + H(+). The catalysed reaction is 3-oxoadipate + NADP(+) = maleylacetate + NADPH + H(+). It functions in the pathway aromatic compound metabolism; 3-chlorocatechol degradation. The polypeptide is Maleylacetate reductase (clcE) (Pseudomonas aeruginosa).